The primary structure comprises 300 residues: Acetylglutamate kinase (300 aa).

Substrate-binding positions include 73-74 (GG), arginine 95, and asparagine 197.

It belongs to the acetylglutamate kinase family. ArgB subfamily.

The protein resides in the cytoplasm. It catalyses the reaction N-acetyl-L-glutamate + ATP = N-acetyl-L-glutamyl 5-phosphate + ADP. It functions in the pathway amino-acid biosynthesis; L-arginine biosynthesis; N(2)-acetyl-L-ornithine from L-glutamate: step 2/4. Its function is as follows. Catalyzes the ATP-dependent phosphorylation of N-acetyl-L-glutamate. The sequence is that of Acetylglutamate kinase from Bordetella bronchiseptica (strain ATCC BAA-588 / NCTC 13252 / RB50) (Alcaligenes bronchisepticus).